A 304-amino-acid polypeptide reads, in one-letter code: Plasmodesmata-located protein 3 (304 aa).

The first 26 residues, 1-26 (MGFYSLKQLLLLYIIIMALFSDLKLA), serve as a signal peptide directing secretion. Topologically, residues 27–272 (KSSSPEYTNL…SSSSGTTGKT (246 aa)) are extracellular. Gnk2-homologous domains lie at 34–138 (TNLI…ISGF) and 143–242 (GMEL…FYPN). 6 disulfides stabilise this stretch: cysteine 41–cysteine 116, cysteine 92–cysteine 101, cysteine 104–cysteine 129, cysteine 151–cysteine 220, cysteine 196–cysteine 205, and cysteine 208–cysteine 233. Residues 273 to 293 (VAIIVGGTAGVGFLVICLLFV) traverse the membrane as a helical segment. A necessary and sufficient for plasmodesmal targeting region spans residues 273–293 (VAIIVGGTAGVGFLVICLLFV). The Cytoplasmic segment spans residues 294-304 (KNLMKKKYDDY).

It belongs to the cysteine-rich repeat secretory protein family. Plasmodesmata-located proteins (PDLD) subfamily. (Microbial infection) Interacts with Grapevine fanleaf virus (GFLV) 2B-MP. In terms of tissue distribution, highly expressed in inflorescence pedacel and shoot apex. Expressed in the outermost L1 layer of the shoot apical meristem and in the epidermis of bulging floral primordia. Within the L1, expression was restricted to the peripheral zone (at protein level).

The protein resides in the cell membrane. Its subcellular location is the cell junction. It is found in the plasmodesma. Functionally, modulates cell-to-cell trafficking. This is Plasmodesmata-located protein 3 from Arabidopsis thaliana (Mouse-ear cress).